The following is a 257-amino-acid chain: Succinate dehydrogenase subunit 5, mitochondrial (257 aa).

The N-terminal 89 residues, 1 to 89, are a transit peptide targeting the mitochondrion; it reads MGTLGRAIHT…AMGMGQVRRF (89 aa).

Component of complex II composed of eight subunits in plants: four classical SDH subunits SDH1, SDH2, SDH3 and SDH4 (a flavoprotein (FP), an iron-sulfur protein (IP), and a cytochrome b composed of a large and a small subunit.), as well as four subunits unknown in mitochondria from bacteria and heterotrophic eukaryotes.

It localises to the mitochondrion inner membrane. It functions in the pathway carbohydrate metabolism; tricarboxylic acid cycle. The sequence is that of Succinate dehydrogenase subunit 5, mitochondrial from Arabidopsis thaliana (Mouse-ear cress).